The following is a 161-amino-acid chain: Small ribosomal subunit protein uS9 (161 aa).

Belongs to the universal ribosomal protein uS9 family.

The protein is Small ribosomal subunit protein uS9 of Methylobacterium radiotolerans (strain ATCC 27329 / DSM 1819 / JCM 2831 / NBRC 15690 / NCIMB 10815 / 0-1).